A 359-amino-acid polypeptide reads, in one-letter code: Proton-coupled zinc antiporter SLC30A2 (359 aa).

The Cytoplasmic segment spans residues 1 to 56 (MASRSFFGALWKSEASRIPPVNLPSVELAVQSNHYCHAQKDSGSHPNSEKQRARRK). The Mitochondrial localization signal motif lies at 34-37 (HYCH). Cysteine 36 contributes to the Zn(2+) binding site. A helical transmembrane segment spans residues 57 to 77 (LYVASAICLVFMIGEIIGGYL). The Lumenal portion of the chain corresponds to 78–86 (AQSLAIMTD). A helical membrane pass occupies residues 87 to 107 (AAHLLTDFASMLISLFSLWVS). 2 residues coordinate Zn(2+): histidine 89 and aspartate 93. The Cytoplasmic portion of the chain corresponds to 108–123 (SRPATKTMNFGWQRAE). A helical transmembrane segment spans residues 124–144 (ILGALLSVLSIWVVTGVLVYL). The Lumenal portion of the chain corresponds to 145-159 (AVQRLISGDYEIKGD). A helical membrane pass occupies residues 160-180 (TMLITSGCAVAVNIIMGLALH). Residues 181 to 207 (QSGHGHSHGHSHEDSSQQQQNPSVRAA) are Cytoplasmic-facing. The chain crosses the membrane as a helical span at residues 208–228 (FIHVVGDLLQSVGVLVAAYII). Positions 210 and 214 each coordinate Zn(2+). At 229 to 236 (YFKPEYKY) the chain is on the lumenal side. Residues 237-257 (VDPICTFLFSILVLGTTLTIL) traverse the membrane as a helical segment. Residues 258-291 (RDVILVLMEGTPKGVDFTTVKNLLLSVDGVEALH) are Cytoplasmic-facing. Positions 281–282 (LL) match the Lysosomal targeting motif motif. The residue at position 283 (serine 283) is a Phosphoserine. Zn(2+) contacts are provided by histidine 291, histidine 308, and glutamate 342. A helical transmembrane segment spans residues 292–312 (SLHIWALTVAQPVLSVHIAIA). Topologically, residues 313–359 (QNVDAQAVLKVARDRLQGKFNFHTMTIQIESYSEDMKSCQECQGPSE) are lumenal.

This sequence belongs to the cation diffusion facilitator (CDF) transporter (TC 2.A.4) family. SLC30A subfamily. In terms of assembly, homodimer. Interacts (via lysosomal targeting motif) with AP3D1; in AP-3-mediated transport to lysosomes. Interacts with TMEM163. Post-translationally, phosphorylated at Ser-283. Phosphorylation at Ser-283 prevents localization to lysosomes. Dephosphorylation of Ser-283 which triggers localization to lysosomes, accumulation of zinc into lysosomes and lysosomal-mediated cell death is induced by TNF-alpha. Detected in intestine, kidney, seminal vesicles and testis.

The protein resides in the cytoplasmic vesicle. Its subcellular location is the secretory vesicle membrane. The protein localises to the zymogen granule membrane. It localises to the endosome membrane. It is found in the lysosome membrane. The protein resides in the mitochondrion inner membrane. The enzyme catalyses Zn(2+)(in) + 2 H(+)(out) = Zn(2+)(out) + 2 H(+)(in). In terms of biological role, electroneutral proton-coupled antiporter concentrating zinc ions into a variety of intracellular organelles including endosomes, zymogen granules and mitochondria. Thereby, plays a crucial role in cellular zinc homeostasis to confer upon cells protection against its potential cytotoxicity. Regulates the zinc concentration of milk, through the transport of zinc ions into secretory vesicles of mammary cells. By concentrating zinc ions into lysosomes participates to lysosomal-mediated cell death during early mammary gland involution. The polypeptide is Proton-coupled zinc antiporter SLC30A2 (Rattus norvegicus (Rat)).